Consider the following 355-residue polypeptide: MNANIFSAPIFKKPTGTHLLILLTGLLFLLVVFFQSTNSLLIPLMATTLISAGLGCQVVPMLRRLKMGQIMREDGPQAHLKKAGTPTMGGSFFVPVALIFALIWSKFTPNVVAVALLTFVYMGIGWLDDWQILRYKSNKGLSPQMKLILQITGAVLFCLWMLVNQVSTDITLWGRLVIPLGFFFWILAGFVLVAESNATNLTDGVDGLAGGTGAIAFLGLGIIIAPSHPDLAIFCTCFAGACLGFIFHNRNPAKVFMGDTGSLALGGALAAVGLIAGHLWGLFLISGLFFLESLSVIAQVIYYKATKGPDGKGKRLLKMAPFHHHLELSGWTETKIVGAFYLVNALLVVLAIWSS.

10 consecutive transmembrane segments (helical) span residues 14–34, 40–60, 84–104, 107–127, 147–167, 176–196, 205–225, 227–247, 268–290, and 334–354; these read PTGTHLLILLTGLLFLLVVFF, LLIPLMATTLISAGLGCQVVP, GTPTMGGSFFVPVALIFALIW, FTPNVVAVALLTFVYMGIGWL, LILQITGAVLFCLWMLVNQVS, LVIPLGFFFWILAGFVLVAES, VDGLAGGTGAIAFLGLGIIIA, SHPDLAIFCTCFAGACLGFIF, ALAAVGLIAGHLWGLFLISGLFF, and TKIVGAFYLVNALLVVLAIWS.

Belongs to the glycosyltransferase 4 family. MraY subfamily. The cofactor is Mg(2+).

The protein resides in the cell inner membrane. The enzyme catalyses UDP-N-acetyl-alpha-D-muramoyl-L-alanyl-gamma-D-glutamyl-meso-2,6-diaminopimeloyl-D-alanyl-D-alanine + di-trans,octa-cis-undecaprenyl phosphate = di-trans,octa-cis-undecaprenyl diphospho-N-acetyl-alpha-D-muramoyl-L-alanyl-D-glutamyl-meso-2,6-diaminopimeloyl-D-alanyl-D-alanine + UMP. It functions in the pathway cell wall biogenesis; peptidoglycan biosynthesis. In terms of biological role, catalyzes the initial step of the lipid cycle reactions in the biosynthesis of the cell wall peptidoglycan: transfers peptidoglycan precursor phospho-MurNAc-pentapeptide from UDP-MurNAc-pentapeptide onto the lipid carrier undecaprenyl phosphate, yielding undecaprenyl-pyrophosphoryl-MurNAc-pentapeptide, known as lipid I. In Microcystis aeruginosa (strain NIES-843 / IAM M-2473), this protein is Phospho-N-acetylmuramoyl-pentapeptide-transferase.